Here is a 141-residue protein sequence, read N- to C-terminus: Nucleoside triphosphatase NudI (141 aa).

The Nudix hydrolase domain occupies 1 to 141; sequence MRQRTIVCPL…RHTLALKGLL (141 aa). The Nudix box signature appears at 38–59; it reads GGVEPGERIEEALRREVREELG.

The protein belongs to the Nudix hydrolase family. NudI subfamily. In terms of assembly, monomer. Mg(2+) serves as cofactor.

It catalyses the reaction a ribonucleoside 5'-triphosphate + H2O = a ribonucleoside 5'-phosphate + diphosphate + H(+). The catalysed reaction is a 2'-deoxyribonucleoside 5'-triphosphate + H2O = a 2'-deoxyribonucleoside 5'-phosphate + diphosphate + H(+). The enzyme catalyses dUTP + H2O = dUMP + diphosphate + H(+). It carries out the reaction dTTP + H2O = dTMP + diphosphate + H(+). It catalyses the reaction dCTP + H2O = dCMP + diphosphate + H(+). In terms of biological role, catalyzes the hydrolysis of nucleoside triphosphates, with a preference for pyrimidine deoxynucleoside triphosphates (dUTP, dTTP and dCTP). This chain is Nucleoside triphosphatase NudI, found in Salmonella schwarzengrund (strain CVM19633).